The primary structure comprises 218 residues: Protein-L-isoaspartate O-methyltransferase (218 aa).

The active site involves Ser-69.

The protein belongs to the methyltransferase superfamily. L-isoaspartyl/D-aspartyl protein methyltransferase family.

Its subcellular location is the cytoplasm. The catalysed reaction is [protein]-L-isoaspartate + S-adenosyl-L-methionine = [protein]-L-isoaspartate alpha-methyl ester + S-adenosyl-L-homocysteine. In terms of biological role, catalyzes the methyl esterification of L-isoaspartyl residues in peptides and proteins that result from spontaneous decomposition of normal L-aspartyl and L-asparaginyl residues. It plays a role in the repair and/or degradation of damaged proteins. The chain is Protein-L-isoaspartate O-methyltransferase from Aromatoleum aromaticum (strain DSM 19018 / LMG 30748 / EbN1) (Azoarcus sp. (strain EbN1)).